The chain runs to 375 residues: Muconate cycloisomerase 1 (375 aa).

Lys-171 (proton acceptor) is an active-site residue. Positions 200, 226, and 251 each coordinate Mn(2+). Glu-329 acts as the Proton donor in catalysis.

This sequence belongs to the mandelate racemase/muconate lactonizing enzyme family. In terms of assembly, homooctamer. It depends on Mn(2+) as a cofactor.

The enzyme catalyses (S)-muconolactone = cis,cis-muconate + H(+). It functions in the pathway aromatic compound metabolism; beta-ketoadipate pathway; 5-oxo-4,5-dihydro-2-furylacetate from catechol: step 2/3. Catalyzes a syn cycloisomerization. The protein is Muconate cycloisomerase 1 (catB) of Pseudomonas putida (Arthrobacter siderocapsulatus).